The following is a 229-amino-acid chain: Probable GTP-binding protein EngB (229 aa).

An EngB-type G domain is found at 53-228 (DLPEVAFAGR…RAEIVRLCID (176 aa)). Residues 61–68 (GRSNVGKS), 88–92 (GRTRE), 106–109 (DLPG), 173–176 (TKAD), and 207–209 (TSS) contribute to the GTP site. Positions 68 and 90 each coordinate Mg(2+).

The protein belongs to the TRAFAC class TrmE-Era-EngA-EngB-Septin-like GTPase superfamily. EngB GTPase family. It depends on Mg(2+) as a cofactor.

In terms of biological role, necessary for normal cell division and for the maintenance of normal septation. The polypeptide is Probable GTP-binding protein EngB (Caulobacter vibrioides (strain NA1000 / CB15N) (Caulobacter crescentus)).